We begin with the raw amino-acid sequence, 166 residues long: NAD(P)H-quinone oxidoreductase subunit I, chloroplastic (166 aa).

2 4Fe-4S ferredoxin-type domains span residues G55–K84 and L95–E124. [4Fe-4S] cluster contacts are provided by C64, C67, C70, C74, C104, C107, C110, and C114.

The protein belongs to the complex I 23 kDa subunit family. In terms of assembly, NDH is composed of at least 16 different subunits, 5 of which are encoded in the nucleus. Requires [4Fe-4S] cluster as cofactor.

Its subcellular location is the plastid. It localises to the chloroplast thylakoid membrane. The enzyme catalyses a plastoquinone + NADH + (n+1) H(+)(in) = a plastoquinol + NAD(+) + n H(+)(out). It catalyses the reaction a plastoquinone + NADPH + (n+1) H(+)(in) = a plastoquinol + NADP(+) + n H(+)(out). Functionally, NDH shuttles electrons from NAD(P)H:plastoquinone, via FMN and iron-sulfur (Fe-S) centers, to quinones in the photosynthetic chain and possibly in a chloroplast respiratory chain. The immediate electron acceptor for the enzyme in this species is believed to be plastoquinone. Couples the redox reaction to proton translocation, and thus conserves the redox energy in a proton gradient. The chain is NAD(P)H-quinone oxidoreductase subunit I, chloroplastic from Calea megacephala.